Reading from the N-terminus, the 153-residue chain is Regulatory protein RecX (153 aa).

The protein belongs to the RecX family.

It is found in the cytoplasm. In terms of biological role, modulates RecA activity. This chain is Regulatory protein RecX, found in Syntrophotalea carbinolica (strain DSM 2380 / NBRC 103641 / GraBd1) (Pelobacter carbinolicus).